The sequence spans 181 residues: ADP-ribosylation factor 1 (181 aa).

Residue Gly-2 is the site of N-myristoyl glycine attachment. Residues 24–31, 67–71, and 126–129 contribute to the GTP site; these read GLDAAGKT, DVGGQ, and NKQD.

Belongs to the small GTPase superfamily. Arf family. Seedling shoots.

Its subcellular location is the golgi apparatus. It catalyses the reaction GTP + H2O = GDP + phosphate + H(+). Functionally, GTP-binding protein involved in protein trafficking; may modulate vesicle budding and uncoating within the Golgi apparatus. This Oryza sativa subsp. japonica (Rice) protein is ADP-ribosylation factor 1.